Consider the following 435-residue polypeptide: Eukaryotic translation initiation factor 3 subunit E (435 aa).

Positions 241 to 409 (TDMFFSPSYI…GTVIMNHPPQ (169 aa)) constitute a PCI domain.

This sequence belongs to the eIF-3 subunit E family. Component of the eukaryotic translation initiation factor 3 (eIF-3) complex.

It is found in the cytoplasm. Component of the eukaryotic translation initiation factor 3 (eIF-3) complex, which is involved in protein synthesis of a specialized repertoire of mRNAs and, together with other initiation factors, stimulates binding of mRNA and methionyl-tRNAi to the 40S ribosome. The eIF-3 complex specifically targets and initiates translation of a subset of mRNAs involved in cell proliferation. The sequence is that of Eukaryotic translation initiation factor 3 subunit E from Phaeosphaeria nodorum (strain SN15 / ATCC MYA-4574 / FGSC 10173) (Glume blotch fungus).